The chain runs to 454 residues: tRNA modification GTPase MnmE (454 aa).

Residues Arg-23, Glu-80, and Lys-120 each contribute to the (6S)-5-formyl-5,6,7,8-tetrahydrofolate site. One can recognise a TrmE-type G domain in the interval 216-377 (GMKVVIAGRP…LRNHLKQSMG (162 aa)). Asn-226 provides a ligand contact to K(+). Residues 226 to 231 (NAGKSS), 245 to 251 (TDIAGTT), 270 to 273 (DTAG), 335 to 338 (NKAD), and 358 to 360 (SAR) each bind GTP. Ser-230 contributes to the Mg(2+) binding site. The K(+) site is built by Thr-245, Ile-247, and Thr-250. Thr-251 is a Mg(2+) binding site. (6S)-5-formyl-5,6,7,8-tetrahydrofolate is bound at residue Lys-454.

The protein belongs to the TRAFAC class TrmE-Era-EngA-EngB-Septin-like GTPase superfamily. TrmE GTPase family. Homodimer. Heterotetramer of two MnmE and two MnmG subunits. K(+) is required as a cofactor.

Its subcellular location is the cytoplasm. Its function is as follows. Exhibits a very high intrinsic GTPase hydrolysis rate. Involved in the addition of a carboxymethylaminomethyl (cmnm) group at the wobble position (U34) of certain tRNAs, forming tRNA-cmnm(5)s(2)U34. The protein is tRNA modification GTPase MnmE of Salmonella gallinarum (strain 287/91 / NCTC 13346).